The primary structure comprises 188 residues: Ion-translocating oxidoreductase complex subunit B (188 aa).

Positions 1–23 (MFTAIWVMVGLAIAIGLILGWSA) are hydrophobic. A 4Fe-4S domain is found at 29–88 (EGNPLAEKIDAILPQTQCGQCGFPGCRPYAEAIAKGEADINQCPPGGEEGVKKLAELLGV). [4Fe-4S] cluster-binding residues include Cys46, Cys49, Cys54, Cys71, Cys113, Cys116, Cys119, Cys123, Cys143, Cys146, Cys149, and Cys153. 4Fe-4S ferredoxin-type domains lie at 104–133 (SVAF…GAAK) and 134–163 (QMHT…MVPI).

Belongs to the 4Fe4S bacterial-type ferredoxin family. RnfB subfamily. As to quaternary structure, the complex is composed of six subunits: RnfA, RnfB, RnfC, RnfD, RnfE and RnfG. [4Fe-4S] cluster is required as a cofactor.

It is found in the cell inner membrane. Part of a membrane-bound complex that couples electron transfer with translocation of ions across the membrane. This Thiobacillus denitrificans (strain ATCC 25259 / T1) protein is Ion-translocating oxidoreductase complex subunit B.